A 126-amino-acid chain; its full sequence is KH homology domain-containing protein 1B (126 aa).

The KH domain occupies 19-78 (PLVFDMEEDQEDYIFGPDDEYLHTLEVHSNTLIQLERWFSPTGQTRVTVVGPLKARLWVM).

Belongs to the KHDC1 family.

The sequence is that of KH homology domain-containing protein 1B (Khdc1b) from Mus musculus (Mouse).